We begin with the raw amino-acid sequence, 168 residues long: Thiol peroxidase (168 aa).

In terms of domain architecture, Thioredoxin spans 19–168; sequence PQAGSKAQTF…YEAALAVLKA (150 aa). Cys61 serves as the catalytic Cysteine sulfenic acid (-SOH) intermediate. Cys61 and Cys95 are joined by a disulfide.

The protein belongs to the peroxiredoxin family. Tpx subfamily. As to quaternary structure, homodimer.

It carries out the reaction a hydroperoxide + [thioredoxin]-dithiol = an alcohol + [thioredoxin]-disulfide + H2O. Functionally, thiol-specific peroxidase that catalyzes the reduction of hydrogen peroxide and organic hydroperoxides to water and alcohols, respectively. Plays a role in cell protection against oxidative stress by detoxifying peroxides. The protein is Thiol peroxidase of Shigella dysenteriae.